We begin with the raw amino-acid sequence, 228 residues long: D-lyxose/D-mannose isomerase (228 aa).

4 residues coordinate Mn(2+): His103, His105, Glu110, and His171.

Belongs to the D-lyxose ketol-isomerase family. In terms of assembly, homodimer. Mn(2+) serves as cofactor.

It catalyses the reaction D-lyxose = D-xylulose. The enzyme catalyses D-mannose = D-fructose. In terms of biological role, sugar isomerase that catalyzes the reversible isomerization of D-lyxose to D-xylulose, and D-mannose to D-fructose. Shows optimum activity using D-lyxose as substrate, but can also effectively catalyze the isomerization between D-fructose and D-mannose. Shows lower activity with L-gulose, D-talose and L-ribose. The protein is D-lyxose/D-mannose isomerase of Serratia proteamaculans.